Consider the following 161-residue polypeptide: Effector CFEM5 (161 aa).

The signal sequence occupies residues methionine 1–alanine 23. Residues valine 24–alanine 126 form the CFEM domain. 3 disulfides stabilise this stretch: cysteine 46–cysteine 78, cysteine 56–cysteine 63, and cysteine 65–cysteine 100. Aspartate 60 lines the heme pocket.

This sequence belongs to the RBT5 family. As to quaternary structure, interacts with Z.mays LRR5; the interaction is direct. Interacts with Z.mays WAK17 isoform 2; the interaction is direct.

It localises to the membrane. The protein localises to the secreted. Its function is as follows. Suppresses host programmed cell death during infection by binding to Z.mays WAK17 isoform 2 and Z.mays LRR5, to prevent activation of Z.mays WAK17 isoform 1 and the downstream hypersensitive response. This Gibberella zeae (strain ATCC MYA-4620 / CBS 123657 / FGSC 9075 / NRRL 31084 / PH-1) (Wheat head blight fungus) protein is Effector CFEM5.